Consider the following 176-residue polypeptide: Transcription factor E (176 aa).

Residues 8–90 form the HTH TFE/IIEalpha-type domain; that stretch reads EDPVIQKYLH…LWTFQYEKIP (83 aa).

This sequence belongs to the TFE family. Monomer. Interaction with RNA polymerase subunits RpoF and RpoE is necessary for Tfe stimulatory transcription activity. Able to interact with Tbp and RNA polymerase in the absence of DNA promoter. Interacts both with the preinitiation and elongation complexes.

Transcription factor that plays a role in the activation of archaeal genes transcribed by RNA polymerase. Facilitates transcription initiation by enhancing TATA-box recognition by TATA-box-binding protein (Tbp), and transcription factor B (Tfb) and RNA polymerase recruitment. Not absolutely required for transcription in vitro, but particularly important in cases where Tbp or Tfb function is not optimal. It dynamically alters the nucleic acid-binding properties of RNA polymerases by stabilizing the initiation complex and destabilizing elongation complexes. Seems to translocate with the RNA polymerase following initiation and acts by binding to the non template strand of the transcription bubble in elongation complexes. This is Transcription factor E from Haloarcula marismortui (strain ATCC 43049 / DSM 3752 / JCM 8966 / VKM B-1809) (Halobacterium marismortui).